A 283-amino-acid polypeptide reads, in one-letter code: Lipoyl synthase (283 aa).

Positions 35, 40, 46, 61, 65, 68, and 273 each coordinate [4Fe-4S] cluster. A Radical SAM core domain is found at phenylalanine 47 to alanine 262.

Belongs to the radical SAM superfamily. Lipoyl synthase family. It depends on [4Fe-4S] cluster as a cofactor.

It is found in the cytoplasm. The catalysed reaction is [[Fe-S] cluster scaffold protein carrying a second [4Fe-4S](2+) cluster] + N(6)-octanoyl-L-lysyl-[protein] + 2 oxidized [2Fe-2S]-[ferredoxin] + 2 S-adenosyl-L-methionine + 4 H(+) = [[Fe-S] cluster scaffold protein] + N(6)-[(R)-dihydrolipoyl]-L-lysyl-[protein] + 4 Fe(3+) + 2 hydrogen sulfide + 2 5'-deoxyadenosine + 2 L-methionine + 2 reduced [2Fe-2S]-[ferredoxin]. The protein operates within protein modification; protein lipoylation via endogenous pathway; protein N(6)-(lipoyl)lysine from octanoyl-[acyl-carrier-protein]: step 2/2. Functionally, catalyzes the radical-mediated insertion of two sulfur atoms into the C-6 and C-8 positions of the octanoyl moiety bound to the lipoyl domains of lipoate-dependent enzymes, thereby converting the octanoylated domains into lipoylated derivatives. In Geobacter metallireducens (strain ATCC 53774 / DSM 7210 / GS-15), this protein is Lipoyl synthase.